Consider the following 206-residue polypeptide: Orotate phosphoribosyltransferase (206 aa).

Residues Arg114, Lys115, Lys118, His120, and 141–149 (EDVVTTGQS) contribute to the 5-phospho-alpha-D-ribose 1-diphosphate site. Residues Thr145 and Arg173 each coordinate orotate.

This sequence belongs to the purine/pyrimidine phosphoribosyltransferase family. PyrE subfamily. In terms of assembly, homodimer. It depends on Mg(2+) as a cofactor.

It carries out the reaction orotidine 5'-phosphate + diphosphate = orotate + 5-phospho-alpha-D-ribose 1-diphosphate. The protein operates within pyrimidine metabolism; UMP biosynthesis via de novo pathway; UMP from orotate: step 1/2. Functionally, catalyzes the transfer of a ribosyl phosphate group from 5-phosphoribose 1-diphosphate to orotate, leading to the formation of orotidine monophosphate (OMP). The protein is Orotate phosphoribosyltransferase of Nostoc sp. (strain PCC 7120 / SAG 25.82 / UTEX 2576).